We begin with the raw amino-acid sequence, 340 residues long: Glycerol-3-phosphate dehydrogenase [NAD(P)+] (340 aa).

Residues Ser-12, Trp-13, Lys-34, and Lys-107 each coordinate NADPH. Sn-glycerol 3-phosphate-binding residues include Lys-107, Gly-138, and Ser-140. Ala-142 contacts NADPH. The sn-glycerol 3-phosphate site is built by Lys-193, Asp-246, Ser-256, Arg-257, and Asn-258. Catalysis depends on Lys-193, which acts as the Proton acceptor. Arg-257 provides a ligand contact to NADPH. Ile-281 and Glu-283 together coordinate NADPH.

It belongs to the NAD-dependent glycerol-3-phosphate dehydrogenase family.

The protein localises to the cytoplasm. It catalyses the reaction sn-glycerol 3-phosphate + NAD(+) = dihydroxyacetone phosphate + NADH + H(+). The enzyme catalyses sn-glycerol 3-phosphate + NADP(+) = dihydroxyacetone phosphate + NADPH + H(+). It functions in the pathway membrane lipid metabolism; glycerophospholipid metabolism. Functionally, catalyzes the reduction of the glycolytic intermediate dihydroxyacetone phosphate (DHAP) to sn-glycerol 3-phosphate (G3P), the key precursor for phospholipid synthesis. This is Glycerol-3-phosphate dehydrogenase [NAD(P)+] from Enterococcus faecalis (strain ATCC 700802 / V583).